The following is a 955-amino-acid chain: 2-oxoglutarate dehydrogenase E1 component (955 aa).

The protein belongs to the alpha-ketoglutarate dehydrogenase family. In terms of assembly, homodimer. Part of the 2-oxoglutarate dehydrogenase (OGDH) complex composed of E1 (2-oxoglutarate dehydrogenase), E2 (dihydrolipoamide succinyltransferase) and E3 (dihydrolipoamide dehydrogenase); the complex contains multiple copies of the three enzymatic components (E1, E2 and E3). The cofactor is thiamine diphosphate.

The catalysed reaction is N(6)-[(R)-lipoyl]-L-lysyl-[protein] + 2-oxoglutarate + H(+) = N(6)-[(R)-S(8)-succinyldihydrolipoyl]-L-lysyl-[protein] + CO2. In terms of biological role, E1 component of the 2-oxoglutarate dehydrogenase (OGDH) complex which catalyzes the decarboxylation of 2-oxoglutarate, the first step in the conversion of 2-oxoglutarate to succinyl-CoA and CO(2). The protein is 2-oxoglutarate dehydrogenase E1 component of Bacillus cereus (strain B4264).